A 226-amino-acid polypeptide reads, in one-letter code: MSDGSVERGTKRAEDSLATHQLTVQYKRYYIDVNENTRGRYIKIAELGTNYKSRIILSIVAAKAIVSEISKMLALIDEPSTGEHAPKESSLIKSETLNVDGRKFYVDLKENVRGRFLRIAQMPMNPRQTRQQIAIPSDGIAEIHKVLTEYLAKFGEGHEQENTNTPKITAENKSFLFHSGKNDRGEFVRISEIKLNSGYRNAITVPMSALVDFRKELDNIIANQGK.

Belongs to the PUR DNA-binding protein family.

It localises to the nucleus. The protein localises to the chromosome. Functionally, probable transcription activator. Binds telomeric DNA containing repeats of the sequence, 5'-TTAGGC-3'. Binds to end-1 promoter, activating end-1 expression, which is required for endoderm specification during embryonic development. This is Transcriptional activator plp-1 from Caenorhabditis elegans.